The primary structure comprises 366 residues: Chalcone synthase B (366 aa).

The active site involves C172.

It belongs to the thiolase-like superfamily. Chalcone/stilbene synthases family.

It carries out the reaction (E)-4-coumaroyl-CoA + 3 malonyl-CoA + 3 H(+) = 2',4,4',6'-tetrahydroxychalcone + 3 CO2 + 4 CoA. The protein operates within secondary metabolite biosynthesis; flavonoid biosynthesis. Functionally, the primary product of this enzyme is 4,2',4',6'-tetrahydroxychalcone (also termed naringenin-chalcone or chalcone) which can under specific conditions spontaneously isomerize into naringenin. The protein is Chalcone synthase B (CHSB) of Ipomoea triloba (Trilobed morning glory).